Consider the following 363-residue polypeptide: Protein RecA (363 aa).

ATP is bound at residue 79–86; that stretch reads GPESSGKT.

This sequence belongs to the RecA family.

The protein resides in the cytoplasm. In terms of biological role, can catalyze the hydrolysis of ATP in the presence of single-stranded DNA, the ATP-dependent uptake of single-stranded DNA by duplex DNA, and the ATP-dependent hybridization of homologous single-stranded DNAs. It interacts with LexA causing its activation and leading to its autocatalytic cleavage. This is Protein RecA from Methylobacterium sp. (strain 4-46).